Consider the following 205-residue polypeptide: Small ribosomal subunit protein uS4 (205 aa).

The segment covering 1-16 has biased composition (basic and acidic residues); sequence MSKRETTKYKIDRRMG. The disordered stretch occupies residues 1–46; sequence MSKRETTKYKIDRRMGENIWGRPKSPVNRRDYGPGQHGQRRKGKLS. An S4 RNA-binding domain is found at 94-157; it reads SRLDAVIYRA…KQLVLVLESV (64 aa).

This sequence belongs to the universal ribosomal protein uS4 family. In terms of assembly, part of the 30S ribosomal subunit. Contacts protein S5. The interaction surface between S4 and S5 is involved in control of translational fidelity.

Its function is as follows. One of the primary rRNA binding proteins, it binds directly to 16S rRNA where it nucleates assembly of the body of the 30S subunit. With S5 and S12 plays an important role in translational accuracy. This Bartonella henselae (strain ATCC 49882 / DSM 28221 / CCUG 30454 / Houston 1) (Rochalimaea henselae) protein is Small ribosomal subunit protein uS4.